A 62-amino-acid chain; its full sequence is Alpha-conotoxin Vt1.27 (62 aa).

Positions Met-1–Ser-21 are cleaved as a signal peptide. A propeptide spanning residues Phe-22 to Arg-40 is cleaved from the precursor. 2 cysteine pairs are disulfide-bonded: Cys-46/Cys-52 and Cys-47/Cys-61.

It belongs to the conotoxin A superfamily. As to expression, expressed by the venom duct.

The protein localises to the secreted. Its function is as follows. The short (45-61) amidated synthetic peptide inhibits the rat neuronal alpha-3-beta-2/CHRNA3-CHRNB2 nicotinic acetylcholine receptor (nAChR) (IC(50)=1.16 uM). It also inhibits Cav2.2/CACNA1C voltage-gated calcium channel (IC(50)=398 nM). In vivo, when tested in rat pain models, this short amidated peptide increases the pain threshold. The polypeptide is Alpha-conotoxin Vt1.27 (Conus planorbis (Planorbis cone)).